Here is a 52-residue protein sequence, read N- to C-terminus: Eukaryotic translation initiation factor 2 subunit 1 (52 aa).

The S1 motif domain maps to 16–52 (EDVVMVNVRSIAEMGAYVSLLEYNNIEGRILLSELSR). Serine 48 carries the post-translational modification Phosphoserine; by HRI. The residue at position 51 (serine 51) is a Phosphoserine.

The protein belongs to the eIF-2-alpha family. In terms of assembly, eukaryotic translation initiation factor 2 eIF2 is a heterotrimeric complex composed of an alpha (EIF2S1), a beta (EIF2S2) and a gamma (EIF2S3) chain. eIF2 is member of the 43S pre-initiation complex (43S PIC). eIF2 forms a complex with at least CELF1/CUGBP1, CALR, CALR3, EIF2S1, EIF2S2, HSP90B1 and HSPA5. Interaction with METAP2 protects EIF2S1 from inhibitory phosphorylation. Interacts with ABCF1. Associates with ribosomes. Interacts with DDX3X in an RNA-independent manner. In terms of processing, phosphorylation at Ser-48 and Ser-51 stabilizes the eIF-2/GDP/eIF2B complex and prevents GDP/GTP exchange reaction, thus impairing the recycling of eIF-2 between successive rounds of initiation and leading to global inhibition of translation, while concomitantly initiating the preferential translation of integrated stress response (ISR)-specific mRNAs. Substrate for at least 4 kinases: EIF2AK1/HRI, EIF2AK2/PKR, EIF2AK3/PERK and EIF2AK4/GCN2. Phosphorylation on Ser-51 by the EIF2AK4/GCN2 protein kinase occurs in response to amino acid starvation and UV irradiation. Phosphorylation at Ser-51 by the EIF2AK3/PERK protein kinase occurs in response to the unfolded protein response. Phosphorylation at Ser-51 by EIF2AK1/HRI in response to mitochondrial damage promotes relocalization to the mitochondrial surface.

The protein localises to the cytoplasm. It localises to the stress granule. Its subcellular location is the cytosol. It is found in the mitochondrion. Activity is regulated by phosphorylation at Ser-49 and Ser-52, which stabilizes the eIF2/GDP/eIF2B complex and prevents the eIF2B-mediated exchange of GDP for GTP, thereby preventing the formation of the 43S pre-initiation complex (43S PIC). This results in the global attenuation of 5' cap-dependent protein synthesis and concomitant translation of ISR-specific mRNAs that contain a short upstream open reading frame (uORF) in their 5' UTR, such as ATF4, ATF5, DDIT3/CHOP and PPP1R15A/GADD34. Functionally, member of the eIF2 complex that functions in the early steps of protein synthesis by forming a ternary complex with GTP and initiator tRNA. This complex binds to a 40S ribosomal subunit, followed by mRNA binding to form a 43S pre-initiation complex. Junction of the 60S ribosomal subunit to form the 80S initiation complex is preceded by hydrolysis of the GTP bound to eIF2 and release of an eIF2-GDP binary complex. In order for eIF2 to recycle and catalyze another round of initiation, the GDP bound to eIF2 must exchange with GTP by way of a reaction catalyzed by eIF2B. EIF2S1/eIF2-alpha is a key component of the integrated stress response (ISR), required for adaptation to various stress: phosphorylation by metabolic-stress sensing protein kinases (EIF2AK1/HRI, EIF2AK2/PKR, EIF2AK3/PERK and EIF2AK4/GCN2) in response to stress converts EIF2S1/eIF2-alpha in a global protein synthesis inhibitor, leading to a attenuation of cap-dependent translation, while concomitantly initiating the preferential translation of ISR-specific mRNAs, such as the transcriptional activators ATF4 and QRICH1, and hence allowing ATF4- and QRICH1-mediated reprogramming. EIF2S1/eIF2-alpha also acts as an activator of mitophagy in response to mitochondrial damage: phosphorylation by EIF2AK1/HRI promotes relocalization to the mitochondrial surface, thereby triggering PRKN-independent mitophagy. This Oryctolagus cuniculus (Rabbit) protein is Eukaryotic translation initiation factor 2 subunit 1 (EIF2S1).